The primary structure comprises 321 residues: Lipoyl synthase (321 aa).

Residues Cys68, Cys73, Cys79, Cys94, Cys98, Cys101, and Ser308 each contribute to the [4Fe-4S] cluster site. Residues Phe80–Thr297 enclose the Radical SAM core domain.

Belongs to the radical SAM superfamily. Lipoyl synthase family. The cofactor is [4Fe-4S] cluster.

The protein resides in the cytoplasm. It catalyses the reaction [[Fe-S] cluster scaffold protein carrying a second [4Fe-4S](2+) cluster] + N(6)-octanoyl-L-lysyl-[protein] + 2 oxidized [2Fe-2S]-[ferredoxin] + 2 S-adenosyl-L-methionine + 4 H(+) = [[Fe-S] cluster scaffold protein] + N(6)-[(R)-dihydrolipoyl]-L-lysyl-[protein] + 4 Fe(3+) + 2 hydrogen sulfide + 2 5'-deoxyadenosine + 2 L-methionine + 2 reduced [2Fe-2S]-[ferredoxin]. It functions in the pathway protein modification; protein lipoylation via endogenous pathway; protein N(6)-(lipoyl)lysine from octanoyl-[acyl-carrier-protein]: step 2/2. Its function is as follows. Catalyzes the radical-mediated insertion of two sulfur atoms into the C-6 and C-8 positions of the octanoyl moiety bound to the lipoyl domains of lipoate-dependent enzymes, thereby converting the octanoylated domains into lipoylated derivatives. The sequence is that of Lipoyl synthase from Escherichia fergusonii (strain ATCC 35469 / DSM 13698 / CCUG 18766 / IAM 14443 / JCM 21226 / LMG 7866 / NBRC 102419 / NCTC 12128 / CDC 0568-73).